A 208-amino-acid chain; its full sequence is Uracil phosphoribosyltransferase (208 aa).

Residues Arg-78, Arg-103, and 130–138 (DPMLATGGS) contribute to the 5-phospho-alpha-D-ribose 1-diphosphate site. Residues Ile-193 and 198–200 (GDA) each bind uracil. Asp-199 contacts 5-phospho-alpha-D-ribose 1-diphosphate.

This sequence belongs to the UPRTase family. Mg(2+) is required as a cofactor.

The enzyme catalyses UMP + diphosphate = 5-phospho-alpha-D-ribose 1-diphosphate + uracil. It participates in pyrimidine metabolism; UMP biosynthesis via salvage pathway; UMP from uracil: step 1/1. With respect to regulation, allosterically activated by GTP. In terms of biological role, catalyzes the conversion of uracil and 5-phospho-alpha-D-ribose 1-diphosphate (PRPP) to UMP and diphosphate. The sequence is that of Uracil phosphoribosyltransferase from Shewanella putrefaciens (strain CN-32 / ATCC BAA-453).